The primary structure comprises 341 residues: 2-dehydro-3-deoxy-L-galactonate 5-dehydrogenase (341 aa).

Cys-37 contributes to the Zn(2+) binding site. Catalysis depends on charge relay system residues Thr-39 and His-42. Zn(2+) is bound by residues His-60, Glu-61, Cys-90, Cys-93, Cys-96, and Cys-104.

It belongs to the zinc-containing alcohol dehydrogenase family. The cofactor is Zn(2+).

It catalyses the reaction 2-dehydro-3-deoxy-L-galactonate + NAD(+) = 3-deoxy-D-glycero-2,5-hexodiulosonate + NADH + H(+). In terms of biological role, involved in the degradation of 3,6-anhydro-L-galactose, which is the major monomeric sugar of red macroalgae. Catalyzes the third step of the pathway, the NAD(+)-dependent oxidation of 2-dehydro-3-deoxy-L-galactonate (L-KDGal) to 3-deoxy-D-glycero-2,5-hexodiulosonate (L-DDGal). This is 2-dehydro-3-deoxy-L-galactonate 5-dehydrogenase from Pseudoalteromonas atlantica (strain T6c / ATCC BAA-1087).